Reading from the N-terminus, the 504-residue chain is ATP synthase subunit alpha, chloroplastic (504 aa).

170–177 (GDRQTGKT) is a binding site for ATP.

This sequence belongs to the ATPase alpha/beta chains family. As to quaternary structure, F-type ATPases have 2 components, CF(1) - the catalytic core - and CF(0) - the membrane proton channel. CF(1) has five subunits: alpha(3), beta(3), gamma(1), delta(1), epsilon(1). CF(0) has four main subunits: a, b, b' and c.

The protein localises to the plastid. It is found in the chloroplast thylakoid membrane. The enzyme catalyses ATP + H2O + 4 H(+)(in) = ADP + phosphate + 5 H(+)(out). Functionally, produces ATP from ADP in the presence of a proton gradient across the membrane. The alpha chain is a regulatory subunit. The sequence is that of ATP synthase subunit alpha, chloroplastic from Cyanidium caldarium (Red alga).